The primary structure comprises 489 residues: Alpha-amylase (489 aa).

Residues histidine 1–glycine 16 form the signal peptide. A disulfide bond links cysteine 44 and cysteine 102. Ca(2+) contacts are provided by asparagine 116, arginine 164, and aspartate 173. Cysteine 152 and cysteine 166 form a disulfide bridge. Residue arginine 201 participates in chloride binding. Residue aspartate 203 is the Nucleophile of the active site. Histidine 207 serves as a coordination point for Ca(2+). Glutamate 240 serves as the catalytic Proton donor. Chloride is bound by residues asparagine 303 and arginine 339. 2 disulfide bridges follow: cysteine 372–cysteine 378 and cysteine 443–cysteine 455.

It belongs to the glycosyl hydrolase 13 family. In terms of assembly, monomer. Ca(2+) is required as a cofactor. It depends on chloride as a cofactor.

The enzyme catalyses Endohydrolysis of (1-&gt;4)-alpha-D-glucosidic linkages in polysaccharides containing three or more (1-&gt;4)-alpha-linked D-glucose units.. This Tribolium castaneum (Red flour beetle) protein is Alpha-amylase.